The primary structure comprises 643 residues: Manganese lipoxygenase (643 aa).

A Lipoxygenase domain is found at 166–643; that stretch reads WYTDEVFAQQ…PEQLANAIVI (478 aa). Residues histidine 325, histidine 330, histidine 510, asparagine 514, and isoleucine 643 each contribute to the Mn(2+) site.

This sequence belongs to the lipoxygenase family. It depends on Mn(2+) as a cofactor.

The enzyme catalyses (9Z,12Z)-octadecadienoate + O2 = (13S)-hydroperoxy-(9Z,11E)-octadecadienoate. Lipoxygenase that metabolizes linoleic and alpha-linolenic acids to 13S-hydroperoxy fatty acids. This is Manganese lipoxygenase from Pleurotus sapidus (Oyster mushroom).